A 372-amino-acid chain; its full sequence is Aminomethyltransferase (372 aa).

It belongs to the GcvT family. In terms of assembly, the glycine cleavage system is composed of four proteins: P, T, L and H.

It carries out the reaction N(6)-[(R)-S(8)-aminomethyldihydrolipoyl]-L-lysyl-[protein] + (6S)-5,6,7,8-tetrahydrofolate = N(6)-[(R)-dihydrolipoyl]-L-lysyl-[protein] + (6R)-5,10-methylene-5,6,7,8-tetrahydrofolate + NH4(+). Functionally, the glycine cleavage system catalyzes the degradation of glycine. The chain is Aminomethyltransferase from Burkholderia multivorans (strain ATCC 17616 / 249).